Here is a 98-residue protein sequence, read N- to C-terminus: Small ribosomal subunit protein bS6 (98 aa).

The protein belongs to the bacterial ribosomal protein bS6 family.

Functionally, binds together with bS18 to 16S ribosomal RNA. This Staphylococcus aureus (strain NCTC 8325 / PS 47) protein is Small ribosomal subunit protein bS6.